Consider the following 261-residue polypeptide: 4-hydroxy-tetrahydrodipicolinate reductase (261 aa).

Position 9 to 14 (9 to 14 (GCLGRM)) interacts with NAD(+). Position 36 (Arg-36) interacts with NADP(+). Residues 97–99 (GTT) and 118–121 (SANM) each bind NAD(+). His-151 serves as the catalytic Proton donor/acceptor. His-152 provides a ligand contact to (S)-2,3,4,5-tetrahydrodipicolinate. The active-site Proton donor is the Lys-155. 161–162 (GT) lines the (S)-2,3,4,5-tetrahydrodipicolinate pocket.

This sequence belongs to the DapB family.

It is found in the cytoplasm. The catalysed reaction is (S)-2,3,4,5-tetrahydrodipicolinate + NAD(+) + H2O = (2S,4S)-4-hydroxy-2,3,4,5-tetrahydrodipicolinate + NADH + H(+). It catalyses the reaction (S)-2,3,4,5-tetrahydrodipicolinate + NADP(+) + H2O = (2S,4S)-4-hydroxy-2,3,4,5-tetrahydrodipicolinate + NADPH + H(+). The protein operates within amino-acid biosynthesis; L-lysine biosynthesis via DAP pathway; (S)-tetrahydrodipicolinate from L-aspartate: step 4/4. Functionally, catalyzes the conversion of 4-hydroxy-tetrahydrodipicolinate (HTPA) to tetrahydrodipicolinate. The polypeptide is 4-hydroxy-tetrahydrodipicolinate reductase (Wolbachia pipientis wMel).